We begin with the raw amino-acid sequence, 450 residues long: TNF receptor-associated factor family protein DDB_G0273433/DDB_G0273509 (450 aa).

An RING-type; degenerate zinc finger spans residues 26-73; that stretch reads CQICFNSVIDFKKETLSFDVLQCRNGHISCHECWNRQLSIKQECPSCK. 2 consecutive TRAF-type zinc fingers follow at residues 129-185 and 186-243; these read HHLK…KKLN and KHIE…SQLS. The stretch at 257-297 forms a coiled coil; sequence QNVMDLHKLQLDECNQDYRKLEKQNRDLEKRLFYLESTVNS. In terms of domain architecture, MATH spans 319 to 439; sequence VYKGKWVINN…NNSLTISISI (121 aa).

Belongs to the TNF receptor-associated factor family. A subfamily.

The protein resides in the cytoplasm. Functionally, probable adapter protein and signal transducer that links members of the tumor necrosis factor receptor family to different signaling pathways by association with the receptor cytoplasmic domain and kinases. The protein is TNF receptor-associated factor family protein DDB_G0273433/DDB_G0273509 of Dictyostelium discoideum (Social amoeba).